The primary structure comprises 126 residues: MQASSEPANVHFEGQNQSSEGQLSTSPPRRWRNCTLQRHGSRASADEFCEQYRSRSHGPQGRRSLEHDNQFFNSRTYYGNGGNTTDTEALQKSVGSQSADEFETLREQTVPNPIAEAWRKYFRKVH.

Residues 1–101 (MQASSEPANV…KSVGSQSADE (101 aa)) are disordered. Polar residues-rich tracts occupy residues 14–27 (GQNQ…STSP) and 86–99 (DTEA…SQSA).

This is an uncharacterized protein from Schizosaccharomyces pombe (strain 972 / ATCC 24843) (Fission yeast).